We begin with the raw amino-acid sequence, 1129 residues long: Phytochrome A type 4 (1129 aa).

Low complexity predominate over residues 1 to 21 (MSSSRPASSSSSRNRQSSRAR). The tract at residues 1–24 (MSSSRPASSSSSRNRQSSRARVLA) is disordered. Residues 217 to 402 (SMEVLCNTVV…VFAVHVNREF (186 aa)) enclose the GAF domain. Cysteine 322 is a phytochromobilin binding site. PAS domains lie at 618–688 (VTSE…LQGK) and 748–822 (VEGD…VSLC). In terms of domain architecture, Histidine kinase spans 902 to 1122 (YMRHAINNPL…TFILTAELAS (221 aa)).

It belongs to the phytochrome family. Homodimer. In terms of processing, contains one covalently linked phytochromobilin chromophore.

In terms of biological role, regulatory photoreceptor which exists in two forms that are reversibly interconvertible by light: the Pr form that absorbs maximally in the red region of the spectrum and the Pfr form that absorbs maximally in the far-red region. Photoconversion of Pr to Pfr induces an array of morphogenic responses, whereas reconversion of Pfr to Pr cancels the induction of those responses. Pfr controls the expression of a number of nuclear genes including those encoding the small subunit of ribulose-bisphosphate carboxylase, chlorophyll A/B binding protein, protochlorophyllide reductase, rRNA, etc. It also controls the expression of its own gene(s) in a negative feedback fashion. In Avena sativa (Oat), this protein is Phytochrome A type 4 (PHYA4).